The sequence spans 123 residues: Small ribosomal subunit protein uS12 (123 aa).

Asp-89 carries the 3-methylthioaspartic acid modification.

The protein belongs to the universal ribosomal protein uS12 family. Part of the 30S ribosomal subunit. Contacts proteins S8 and S17. May interact with IF1 in the 30S initiation complex.

Functionally, with S4 and S5 plays an important role in translational accuracy. Interacts with and stabilizes bases of the 16S rRNA that are involved in tRNA selection in the A site and with the mRNA backbone. Located at the interface of the 30S and 50S subunits, it traverses the body of the 30S subunit contacting proteins on the other side and probably holding the rRNA structure together. The combined cluster of proteins S8, S12 and S17 appears to hold together the shoulder and platform of the 30S subunit. This Gluconacetobacter diazotrophicus (strain ATCC 49037 / DSM 5601 / CCUG 37298 / CIP 103539 / LMG 7603 / PAl5) protein is Small ribosomal subunit protein uS12.